Reading from the N-terminus, the 338-residue chain is Lipoate-protein ligase A (338 aa).

The BPL/LPL catalytic domain occupies 29–216; sequence PATQRVLFLW…AFFAHYGERV (188 aa). Residues Arg-71, 76-79, and Lys-134 contribute to the ATP site; that span reads GAVF. (R)-lipoate is bound at residue Lys-134.

This sequence belongs to the LplA family. In terms of assembly, monomer.

It is found in the cytoplasm. It carries out the reaction L-lysyl-[lipoyl-carrier protein] + (R)-lipoate + ATP = N(6)-[(R)-lipoyl]-L-lysyl-[lipoyl-carrier protein] + AMP + diphosphate + H(+). The protein operates within protein modification; protein lipoylation via exogenous pathway; protein N(6)-(lipoyl)lysine from lipoate: step 1/2. Its pathway is protein modification; protein lipoylation via exogenous pathway; protein N(6)-(lipoyl)lysine from lipoate: step 2/2. In terms of biological role, catalyzes both the ATP-dependent activation of exogenously supplied lipoate to lipoyl-AMP and the transfer of the activated lipoyl onto the lipoyl domains of lipoate-dependent enzymes. The protein is Lipoate-protein ligase A of Escherichia coli O8 (strain IAI1).